The sequence spans 786 residues: Succinoglycan biosynthesis transport protein ExoP (786 aa).

The Cytoplasmic portion of the chain corresponds to 1–42 (MNRTAPMKQRSVPLSSIMPSEEQSDGFIDLDRLVAAVFRRAR). Residues 43–66 (LVAAFVVLFIALGAAYLLFATPYY) form a helical membrane-spanning segment. The Periplasmic portion of the chain corresponds to 67–689 (TSMTQILLDE…LIENARNAFD (623 aa)). 583–590 (ALPDEGKS) provides a ligand contact to ATP. Residues 690–711 (YVVVDLAALAPVVDAKAFAPLA) traverse the membrane as a helical segment. Topologically, residues 712 to 786 (DGILFVVEWG…ENTITENTAA (75 aa)) are cytoplasmic.

The protein to B.solanacearum EpsB.

The protein resides in the cell membrane. The protein operates within glycan metabolism; exopolysaccharide biosynthesis. This is Succinoglycan biosynthesis transport protein ExoP (exoP) from Rhizobium meliloti (strain 1021) (Ensifer meliloti).